The chain runs to 102 residues: Large ribosomal subunit protein bL21 (102 aa).

It belongs to the bacterial ribosomal protein bL21 family. As to quaternary structure, part of the 50S ribosomal subunit. Contacts protein L20.

Its function is as follows. This protein binds to 23S rRNA in the presence of protein L20. The protein is Large ribosomal subunit protein bL21 of Geobacter sp. (strain M21).